Reading from the N-terminus, the 432-residue chain is D-amino acid dehydrogenase (432 aa).

3–17 (VVILGSGVVGVTSAW) contributes to the FAD binding site.

Belongs to the DadA oxidoreductase family. It depends on FAD as a cofactor.

The enzyme catalyses a D-alpha-amino acid + A + H2O = a 2-oxocarboxylate + AH2 + NH4(+). The protein operates within amino-acid degradation; D-alanine degradation; NH(3) and pyruvate from D-alanine: step 1/1. Oxidative deamination of D-amino acids. The chain is D-amino acid dehydrogenase from Salmonella paratyphi C (strain RKS4594).